The following is a 488-amino-acid chain: Teichuronic acid biosynthesis protein TuaE (488 aa).

Helical transmembrane passes span 7 to 29, 35 to 57, 64 to 86, 91 to 110, 122 to 144, 154 to 173, 180 to 202, 222 to 244, 257 to 274, 279 to 298, 303 to 322, 354 to 376, 397 to 419, and 459 to 476; these read AVHT…GAIH, MQMA…ATAF, FMAV…AIHL, LFLY…FGMV, LQVK…SLLW, YLAL…MYVQ, IVYA…NHIT, PTSV…FFYI, AIGL…FATG, LLGI…PPVL, IWLS…SKIY, NAWH…SYYL, ILAN…LIWV, and LFFH…VNVL.

It localises to the cell membrane. It participates in cell wall biogenesis; teichuronic acid biosynthesis. Functionally, might be involved in the polymerization of teichuronic acid repeating units after their translocation to the outer surface of the membrane. The polypeptide is Teichuronic acid biosynthesis protein TuaE (tuaE) (Bacillus subtilis (strain 168)).